The following is a 660-amino-acid chain: Peroxisomal acyl-coenzyme A oxidase 1 (660 aa).

Ser-26 is subject to Phosphoserine. 2 positions are modified to N6-succinyllysine: Lys-89 and Lys-90. FAD is bound by residues Thr-139 and Gly-178. Lys-216 is modified (N6-acetyllysine). Residue Lys-241 is modified to N6-succinyllysine. 3 positions are modified to N6-acetyllysine: Lys-255, Lys-267, and Lys-272. Position 349 is an N6-succinyllysine (Lys-349). The Proton acceptor role is filled by Glu-421. N6-acetyllysine; alternate is present on residues Lys-437 and Lys-446. An N6-succinyllysine; alternate mark is found at Lys-437 and Lys-446. N6-acetyllysine is present on residues Lys-500 and Lys-504. Position 512 is an N6-acetyllysine; alternate (Lys-512). Lys-512 carries the N6-succinyllysine; alternate modification. Lys-542 bears the N6-succinyllysine mark. Lys-637 is subject to N6-acetyllysine; alternate. Lys-637 is modified (N6-succinyllysine; alternate). At Lys-643 the chain carries N6-succinyllysine. At Ser-649 the chain carries Phosphoserine. Lys-651 is subject to N6-acetyllysine. Lys-654 carries the post-translational modification N6-succinyllysine. The Microbody targeting signal signature appears at 658–660 (SKL).

It belongs to the acyl-CoA oxidase family. As to quaternary structure, homodimer. Interacts with LONP2. FAD is required as a cofactor. In terms of tissue distribution, widely expressed with highest levels of isoform 1 and isoform 2 detected in testis. Isoform 1 is expressed at higher levels than isoform 2 in liver and kidney while isoform 2 levels are higher in brain, lung, muscle, white adipose tissue and testis. Levels are almost equal in heart.

The protein localises to the peroxisome. It carries out the reaction a 2,3-saturated acyl-CoA + O2 = a (2E)-enoyl-CoA + H2O2. The enzyme catalyses hexadecanoyl-CoA + O2 = (2E)-hexadecenoyl-CoA + H2O2. It catalyses the reaction dodecanoyl-CoA + O2 = (2E)-dodecenoyl-CoA + H2O2. The catalysed reaction is octanoyl-CoA + O2 = (2E)-octenoyl-CoA + H2O2. It carries out the reaction decanoyl-CoA + O2 = (2E)-decenoyl-CoA + H2O2. The enzyme catalyses tetradecanoyl-CoA + O2 = (2E)-tetradecenoyl-CoA + H2O2. It catalyses the reaction hexadecanedioyl-CoA + O2 = (2E)-hexadecenedioyl-CoA + H2O2. The catalysed reaction is (5Z,8Z,11Z,14Z,17Z)-eicosapentaenoyl-CoA + O2 = (2E,5Z,8Z,11Z,14Z,17Z)-icosahexaenoyl-CoA + H2O2. It carries out the reaction tetracosanoyl-CoA + O2 = (2E)-tetracosenoyl-CoA + H2O2. The enzyme catalyses glutaryl-CoA + O2 = (2E)-glutaconyl-CoA + H2O2. It catalyses the reaction hexanoyl-CoA + O2 = (2E)-hexenoyl-CoA + H2O2. The catalysed reaction is octadecanoyl-CoA + O2 = (2E)-octadecenoyl-CoA + H2O2. It carries out the reaction (6Z,9Z,12Z,15Z,18Z,21Z)-tetracosahexaenoyl-CoA + O2 = (2E,6Z,9Z,12Z,15Z,18Z,21Z)-tetracosaheptaenoyl-CoA + H2O2. Its pathway is lipid metabolism; peroxisomal fatty acid beta-oxidation. Involved in the initial and rate-limiting step of peroxisomal beta-oxidation of straight-chain saturated and unsaturated very-long-chain fatty acids. Catalyzes the desaturation of fatty acyl-CoAs such as palmitoyl-CoA (hexadecanoyl-CoA) to 2-trans-enoyl-CoAs ((2E)-enoyl-CoAs) such as (2E)-hexadecenoyl-CoA, and donates electrons directly to molecular oxygen (O(2)), thereby producing hydrogen peroxide (H(2)O(2)). Its function is as follows. Shows highest activity against medium-chain fatty acyl-CoAs. Shows optimum activity with a chain length of 10 carbons (decanoyl-CoA) in vitro. Functionally, is active against a much broader range of substrates and shows activity towards long-chain fatty acyl-CoAs. This Homo sapiens (Human) protein is Peroxisomal acyl-coenzyme A oxidase 1.